The following is a 401-amino-acid chain: Imidazolonepropionase (401 aa).

Residues His70 and His72 each contribute to the Fe(3+) site. His70 and His72 together coordinate Zn(2+). 4-imidazolone-5-propanoate-binding residues include Arg79, Tyr142, and His175. Residue Tyr142 participates in N-formimidoyl-L-glutamate binding. Residue His238 coordinates Fe(3+). His238 is a Zn(2+) binding site. Position 241 (Gln241) interacts with 4-imidazolone-5-propanoate. Fe(3+) is bound at residue Asp313. Position 313 (Asp313) interacts with Zn(2+). Residues Asn315 and Gly317 each coordinate N-formimidoyl-L-glutamate. Residue Thr318 participates in 4-imidazolone-5-propanoate binding.

It belongs to the metallo-dependent hydrolases superfamily. HutI family. The cofactor is Zn(2+). It depends on Fe(3+) as a cofactor.

The protein resides in the cytoplasm. The catalysed reaction is 4-imidazolone-5-propanoate + H2O = N-formimidoyl-L-glutamate. The protein operates within amino-acid degradation; L-histidine degradation into L-glutamate; N-formimidoyl-L-glutamate from L-histidine: step 3/3. Catalyzes the hydrolytic cleavage of the carbon-nitrogen bond in imidazolone-5-propanoate to yield N-formimidoyl-L-glutamate. It is the third step in the universal histidine degradation pathway. This chain is Imidazolonepropionase, found in Acidiphilium cryptum (strain JF-5).